A 191-amino-acid polypeptide reads, in one-letter code: Molybdenum cofactor guanylyltransferase (191 aa).

GTP contacts are provided by residues 11 to 13, K23, D66, and D97; that span reads LCG. D97 is a Mg(2+) binding site.

This sequence belongs to the MobA family. In terms of assembly, monomer. Mg(2+) serves as cofactor.

Its subcellular location is the cytoplasm. It catalyses the reaction Mo-molybdopterin + GTP + H(+) = Mo-molybdopterin guanine dinucleotide + diphosphate. Functionally, transfers a GMP moiety from GTP to Mo-molybdopterin (Mo-MPT) cofactor (Moco or molybdenum cofactor) to form Mo-molybdopterin guanine dinucleotide (Mo-MGD) cofactor. This is Molybdenum cofactor guanylyltransferase from Campylobacter jejuni subsp. jejuni serotype O:2 (strain ATCC 700819 / NCTC 11168).